A 290-amino-acid polypeptide reads, in one-letter code: Protease HtpX (290 aa).

Helical transmembrane passes span 12–32 and 42–62; these read IAVM…GLLA and ALLV…LLIS. A Zn(2+)-binding site is contributed by histidine 147. The active site involves glutamate 148. Position 151 (histidine 151) interacts with Zn(2+). The next 2 membrane-spanning stretches (helical) occupy residues 162-182 and 197-217; these read LIQG…GHVV and FWIV…MIVM. Glutamate 224 is a binding site for Zn(2+).

It belongs to the peptidase M48B family. Zn(2+) is required as a cofactor.

Its subcellular location is the cell inner membrane. The sequence is that of Protease HtpX from Pseudoalteromonas atlantica (strain T6c / ATCC BAA-1087).